The sequence spans 631 residues: tRNA 5-methylaminomethyl-2-thiouridine biosynthesis bifunctional protein MnmC (631 aa).

The segment at 1 to 243 (MITDLRPPAM…KREMLTGRLP (243 aa)) is tRNA (mnm(5)s(2)U34)-methyltransferase. The segment at 261–631 (IGAGIAGAAL…GRLYRNQLTV (371 aa)) is FAD-dependent cmnm(5)s(2)U34 oxidoreductase.

In the N-terminal section; belongs to the methyltransferase superfamily. tRNA (mnm(5)s(2)U34)-methyltransferase family. This sequence in the C-terminal section; belongs to the DAO family. Requires FAD as cofactor.

The protein localises to the cytoplasm. The enzyme catalyses 5-aminomethyl-2-thiouridine(34) in tRNA + S-adenosyl-L-methionine = 5-methylaminomethyl-2-thiouridine(34) in tRNA + S-adenosyl-L-homocysteine + H(+). In terms of biological role, catalyzes the last two steps in the biosynthesis of 5-methylaminomethyl-2-thiouridine (mnm(5)s(2)U) at the wobble position (U34) in tRNA. Catalyzes the FAD-dependent demodification of cmnm(5)s(2)U34 to nm(5)s(2)U34, followed by the transfer of a methyl group from S-adenosyl-L-methionine to nm(5)s(2)U34, to form mnm(5)s(2)U34. The polypeptide is tRNA 5-methylaminomethyl-2-thiouridine biosynthesis bifunctional protein MnmC (Marinobacter nauticus (strain ATCC 700491 / DSM 11845 / VT8) (Marinobacter aquaeolei)).